A 275-amino-acid chain; its full sequence is uncharacterized protein (275 aa).

An HTH araC/xylS-type domain is found at 171–268 (KMVCEFLEEH…GLTPKQYMKI (98 aa)). DNA-binding regions (H-T-H motif) lie at residues 188–209 (NDLSELTGWSKYHLLRSFTKQK) and 235–258 (PIDAAFQTGFSDQSHMTKFFKRQV).

This is an uncharacterized protein from Bacillus subtilis (strain 168).